The following is a 279-amino-acid chain: Phosphatidylglycerol--prolipoprotein diacylglyceryl transferase (279 aa).

Transmembrane regions (helical) follow at residues 14–34 (IAFSLGSIEVHWYGLAYACAI), 62–82 (YFLWAELGIVLGARIGYILIY), 106–126 (FVGIRGMSYHGGLVGFLIASY), 136–156 (LLIYLDLIAISLPLGYVFGRI), 190–210 (PSQLIEAFLEGVIVFLMVMWA), 218–238 (GLLIVVYGLGYSLMRFIAEFY), and 252–272 (LSMGQILSLFMVIVSLGILLY). Arg155 contributes to the a 1,2-diacyl-sn-glycero-3-phospho-(1'-sn-glycerol) binding site.

This sequence belongs to the Lgt family.

It localises to the cell inner membrane. The enzyme catalyses L-cysteinyl-[prolipoprotein] + a 1,2-diacyl-sn-glycero-3-phospho-(1'-sn-glycerol) = an S-1,2-diacyl-sn-glyceryl-L-cysteinyl-[prolipoprotein] + sn-glycerol 1-phosphate + H(+). The protein operates within protein modification; lipoprotein biosynthesis (diacylglyceryl transfer). Catalyzes the transfer of the diacylglyceryl group from phosphatidylglycerol to the sulfhydryl group of the N-terminal cysteine of a prolipoprotein, the first step in the formation of mature lipoproteins. The protein is Phosphatidylglycerol--prolipoprotein diacylglyceryl transferase of Helicobacter pylori (strain HPAG1).